The following is a 516-amino-acid chain: Bifunctional purine biosynthesis protein PurH (516 aa).

One can recognise an MGS-like domain in the interval 1–146 (MAPFALLSVS…KNHADVAVLT (146 aa)).

It belongs to the PurH family.

It catalyses the reaction (6R)-10-formyltetrahydrofolate + 5-amino-1-(5-phospho-beta-D-ribosyl)imidazole-4-carboxamide = 5-formamido-1-(5-phospho-D-ribosyl)imidazole-4-carboxamide + (6S)-5,6,7,8-tetrahydrofolate. The catalysed reaction is IMP + H2O = 5-formamido-1-(5-phospho-D-ribosyl)imidazole-4-carboxamide. It functions in the pathway purine metabolism; IMP biosynthesis via de novo pathway; 5-formamido-1-(5-phospho-D-ribosyl)imidazole-4-carboxamide from 5-amino-1-(5-phospho-D-ribosyl)imidazole-4-carboxamide (10-formyl THF route): step 1/1. It participates in purine metabolism; IMP biosynthesis via de novo pathway; IMP from 5-formamido-1-(5-phospho-D-ribosyl)imidazole-4-carboxamide: step 1/1. This is Bifunctional purine biosynthesis protein PurH from Parasynechococcus marenigrum (strain WH8102).